A 379-amino-acid chain; its full sequence is Cyclic di-GMP phosphodiesterase PdeB (379 aa).

Positions 114–310 constitute an HD-GYP domain; that stretch reads FYKKQKKIFI…PLDFIVELND (197 aa).

It depends on Mn(2+) as a cofactor.

The enzyme catalyses 3',3'-c-di-GMP + 2 H2O = 2 GMP + 2 H(+). In terms of biological role, phosphodiesterase (PDE) that catalyzes the hydrolysis of cyclic diguanylate (c-di-GMP) to GMP. In Borreliella burgdorferi (strain ATCC 35210 / DSM 4680 / CIP 102532 / B31) (Borrelia burgdorferi), this protein is Cyclic di-GMP phosphodiesterase PdeB.